The primary structure comprises 408 residues: S-adenosylmethionine synthase (408 aa).

H16 serves as a coordination point for ATP. Position 18 (D18) interacts with Mg(2+). E44 lines the K(+) pocket. 2 residues coordinate L-methionine: E57 and Q100. The flexible loop stretch occupies residues 100–110 (QSPEINQGVSR). ATP is bound by residues 177–179 (DGK), D257, 263–264 (RK), A280, and K284. Residue D257 coordinates L-methionine. An L-methionine-binding site is contributed by K288.

Belongs to the AdoMet synthase family. As to quaternary structure, homotetramer; dimer of dimers. The cofactor is Mg(2+). K(+) is required as a cofactor.

The protein localises to the cytoplasm. The enzyme catalyses L-methionine + ATP + H2O = S-adenosyl-L-methionine + phosphate + diphosphate. The protein operates within amino-acid biosynthesis; S-adenosyl-L-methionine biosynthesis; S-adenosyl-L-methionine from L-methionine: step 1/1. Catalyzes the formation of S-adenosylmethionine (AdoMet) from methionine and ATP. The overall synthetic reaction is composed of two sequential steps, AdoMet formation and the subsequent tripolyphosphate hydrolysis which occurs prior to release of AdoMet from the enzyme. This is S-adenosylmethionine synthase from Bifidobacterium animalis subsp. lactis (strain AD011).